We begin with the raw amino-acid sequence, 262 residues long: Acyl-coenzyme A diphosphatase FITM2 (262 aa).

Over 1–23 the chain is Cytoplasmic; that stretch reads MEHLERCAWVLRGTLVRSAVRKY. The chain crosses the membrane as a helical span at residues 24 to 44; the sequence is LPWALAASMLAGSLLKELSPL. At 45-57 the chain is on the lumenal side; the sequence is PESYLSNKRNVLN. The helical transmembrane segment at 58–78 threads the bilayer; sequence VYFVKVAWAWTFCLLLPFIAL. The Cytoplasmic portion of the chain corresponds to 79–93; that stretch reads TNYHLTGKAGLVLRR. Residues 94 to 114 form a helical membrane-spanning segment; that stretch reads LSTLLVGTAIWYVCTAIFSNI. Over 115–145 the chain is Lumenal; that stretch reads EHYTGSCYQSPALEGERKEHQSKQQCHGEGG. Residues 146–166 form a helical membrane-spanning segment; it reads FWHGFDISGHSFLLTFCALMI. Residue His155 is part of the active site. The Cytoplasmic portion of the chain corresponds to 167–190; the sequence is VEEMAVLHEVKTDRNHCLHAAITT. A helical transmembrane segment spans residues 191 to 211; sequence LVVALGFLTFIWVWMFLCTAV. Residues 212–218 are Lumenal-facing; that stretch reads YFHNLSQ. His214 is an active-site residue. The chain crosses the membrane as a helical span at residues 219–239; sequence KVFGTLFGLLGWYGTYGCWYL. Topologically, residues 240-262 are cytoplasmic; it reads KSFSPGLPPQSSSLNLKQDTYKK.

Belongs to the FIT family. FIT2 subfamily.

It is found in the endoplasmic reticulum membrane. It catalyses the reaction an acyl-CoA + H2O = an acyl-4'-phosphopantetheine + adenosine 3',5'-bisphosphate + 2 H(+). The catalysed reaction is (9Z)-octadecenoyl-CoA + H2O = S-(9Z-octadecenoyl)-4'-phosphopantetheine + adenosine 3',5'-bisphosphate + 2 H(+). The enzyme catalyses (5Z,8Z,11Z,14Z)-eicosatetraenoyl-CoA + H2O = S-(5Z,8Z,11Z,14Z-eicosatetraenoyl)-4'-phosphopantetheine + adenosine 3',5'-bisphosphate + 2 H(+). It carries out the reaction hexadecanoyl-CoA + H2O = S-hexadecanoyl-4'-phosphopantetheine + adenosine 3',5'-bisphosphate + 2 H(+). Its function is as follows. Fatty acyl-coenzyme A (CoA) diphosphatase that hydrolyzes fatty acyl-CoA to yield acyl-4'-phosphopantetheine and adenosine 3',5'-bisphosphate. Preferentially hydrolyzes unsaturated long-chain acyl-CoA substrates such as oleoyl-CoA/(9Z)-octadecenoyl-CoA and arachidonoyl-CoA/(5Z,8Z,11Z,14Z)-eicosatetraenoyl-CoA in the endoplasmic reticulum (ER) lumen. This catalytic activity is required for maintaining ER structure and for lipid droplets (LDs) biogenesis, which are lipid storage organelles involved in maintaining lipid and energy homeostasis. Directly binds to diacylglycerol (DAGs) and triacylglycerol, which is also important for LD biogenesis. May support directional budding of nacent LDs from the ER into the cytosol by reducing DAG levels at sites of LD formation. Plays a role in the regulation of cell morphology and cytoskeletal organization. The sequence is that of Acyl-coenzyme A diphosphatase FITM2 from Bos taurus (Bovine).